The following is a 220-amino-acid chain: Demethylmenaquinone methyltransferase (220 aa).

Residues Thr-47, Asp-67, and 93 to 94 each bind S-adenosyl-L-methionine; that span reads DA.

Belongs to the class I-like SAM-binding methyltransferase superfamily. MenG/UbiE family.

The enzyme catalyses a 2-demethylmenaquinol + S-adenosyl-L-methionine = a menaquinol + S-adenosyl-L-homocysteine + H(+). It participates in quinol/quinone metabolism; menaquinone biosynthesis; menaquinol from 1,4-dihydroxy-2-naphthoate: step 2/2. In terms of biological role, methyltransferase required for the conversion of demethylmenaquinol (DMKH2) to menaquinol (MKH2). The chain is Demethylmenaquinone methyltransferase from Thermus thermophilus (strain ATCC BAA-163 / DSM 7039 / HB27).